We begin with the raw amino-acid sequence, 380 residues long: Glutamyl-tRNA reductase 1 (380 aa).

Substrate contacts are provided by residues threonine 42 to arginine 45, serine 93, glutamate 98 to aspartate 100, and glutamine 104. Residue cysteine 43 is the Nucleophile of the active site. Position 172 to 177 (glycine 172 to glycine 177) interacts with NADP(+).

The protein belongs to the glutamyl-tRNA reductase family. As to quaternary structure, homodimer.

It catalyses the reaction (S)-4-amino-5-oxopentanoate + tRNA(Glu) + NADP(+) = L-glutamyl-tRNA(Glu) + NADPH + H(+). It functions in the pathway porphyrin-containing compound metabolism; protoporphyrin-IX biosynthesis; 5-aminolevulinate from L-glutamyl-tRNA(Glu): step 1/2. Catalyzes the NADPH-dependent reduction of glutamyl-tRNA(Glu) to glutamate 1-semialdehyde (GSA). The sequence is that of Glutamyl-tRNA reductase 1 from Pyrobaculum calidifontis (strain DSM 21063 / JCM 11548 / VA1).